The primary structure comprises 314 residues: Nodulation protein D 1 (314 aa).

An HTH lysR-type domain is found at 6-63 (LDLNLLVALDAVMTARNLTAAARKINLSQPAMSAAIARLRTYFRDELFTMRGRELVPT). A DNA-binding region (H-T-H motif) is located at residues 23–42 (LTAAARKINLSQPAMSAAIA).

It belongs to the LysR transcriptional regulatory family.

In terms of biological role, nodD regulates the expression of the nodABCFE genes which encode other nodulation proteins. NodD is also a negative regulator of its own expression. Binds flavonoids as inducers. This chain is Nodulation protein D 1 (nodD1), found in Bradyrhizobium diazoefficiens (strain JCM 10833 / BCRC 13528 / IAM 13628 / NBRC 14792 / USDA 110).